Here is a 409-residue protein sequence, read N- to C-terminus: Elongation factor Tu (409 aa).

Residues 10 to 214 form the tr-type G domain; it reads KPHVNIGTIG…EVDGYIPQPE (205 aa). Residues 19 to 26 are G1; sequence GHVDHGKT. 19-26 is a binding site for GTP; the sequence is GHVDHGKT. Thr26 is a Mg(2+) binding site. Residues 60 to 64 are G2; it reads GITIN. The tract at residues 81–84 is G3; sequence DCPG. GTP-binding positions include 81–85 and 136–139; these read DCPGH and NKQD. The G4 stretch occupies residues 136–139; the sequence is NKQD. Positions 174-176 are G5; sequence SAL.

It belongs to the TRAFAC class translation factor GTPase superfamily. Classic translation factor GTPase family. EF-Tu/EF-1A subfamily. In terms of assembly, monomer.

It localises to the cytoplasm. It carries out the reaction GTP + H2O = GDP + phosphate + H(+). Its function is as follows. GTP hydrolase that promotes the GTP-dependent binding of aminoacyl-tRNA to the A-site of ribosomes during protein biosynthesis. The polypeptide is Elongation factor Tu (Trichodesmium erythraeum (strain IMS101)).